Reading from the N-terminus, the 122-residue chain is Large ribosomal subunit protein uL14 (122 aa).

It belongs to the universal ribosomal protein uL14 family. In terms of assembly, part of the 50S ribosomal subunit. Forms a cluster with proteins L3 and L19. In the 70S ribosome, L14 and L19 interact and together make contacts with the 16S rRNA in bridges B5 and B8.

In terms of biological role, binds to 23S rRNA. Forms part of two intersubunit bridges in the 70S ribosome. This is Large ribosomal subunit protein uL14 from Halorhodospira halophila (strain DSM 244 / SL1) (Ectothiorhodospira halophila (strain DSM 244 / SL1)).